A 188-amino-acid polypeptide reads, in one-letter code: Methylated-DNA--protein-cysteine methyltransferase (188 aa).

Positions 120, 121, and 134 each coordinate DNA. Residue Cys151 is the Nucleophile; methyl group acceptor of the active site. Ser157 lines the DNA pocket.

The protein belongs to the MGMT family.

It is found in the nucleus. It carries out the reaction a 6-O-methyl-2'-deoxyguanosine in DNA + L-cysteinyl-[protein] = S-methyl-L-cysteinyl-[protein] + a 2'-deoxyguanosine in DNA. The catalysed reaction is a 4-O-methyl-thymidine in DNA + L-cysteinyl-[protein] = a thymidine in DNA + S-methyl-L-cysteinyl-[protein]. Functionally, involved in the cellular defense against the biological effects of O6-methylguanine (O6-MeG) and O4-methylthymine (O4-MeT) in DNA. Repairs the methylated nucleobase in DNA by stoichiometrically transferring the methyl group to a cysteine residue in the enzyme. This is a suicide reaction: the enzyme is irreversibly inactivated. Prefers double-stranded DNA over single-stranded DNA as substrate. The protein is Methylated-DNA--protein-cysteine methyltransferase (MGT1) of Saccharomyces cerevisiae (strain ATCC 204508 / S288c) (Baker's yeast).